The primary structure comprises 298 residues: Elongation factor Ts (298 aa).

The segment at 79 to 82 is involved in Mg(2+) ion dislocation from EF-Tu; that stretch reads TDFV.

Belongs to the EF-Ts family.

The protein localises to the cytoplasm. Functionally, associates with the EF-Tu.GDP complex and induces the exchange of GDP to GTP. It remains bound to the aminoacyl-tRNA.EF-Tu.GTP complex up to the GTP hydrolysis stage on the ribosome. The polypeptide is Elongation factor Ts (Cereibacter sphaeroides (strain ATCC 17029 / ATH 2.4.9) (Rhodobacter sphaeroides)).